We begin with the raw amino-acid sequence, 361 residues long: Peptide chain release factor 1 (361 aa).

Gln-235 is subject to N5-methylglutamine.

This sequence belongs to the prokaryotic/mitochondrial release factor family. In terms of processing, methylated by PrmC. Methylation increases the termination efficiency of RF1.

It is found in the cytoplasm. Its function is as follows. Peptide chain release factor 1 directs the termination of translation in response to the peptide chain termination codons UAG and UAA. This is Peptide chain release factor 1 from Xanthomonas campestris pv. campestris (strain 8004).